The following is a 1021-amino-acid chain: Disease resistance protein Pikm2-TS (1021 aa).

Residues 1-182 form a structured coiled coil (CC) domain region; sequence MELVVGASEA…PQIIGIKEPV (182 aa). Residues 186-519 enclose the NB-ARC domain; that stretch reads TVMEELEVWL…WIAEGFANEK (334 aa). Residues 297–317 form a disordered region; that stretch reads PENDGNPDNTPIRLQETTDDD. LRR repeat units follow at residues 612-634, 659-682, and 683-705; these read LAQV…SFNY, MLLL…IQKL, and EYLE…IVQL. Residues 719–751 are disordered; it reads RKGLRLPQEKSKKPIKNPSPQGKTKEPAKKGFL. 6 LRR repeats span residues 785–807, 817–841, 843–865, 866–888, 912–935, and 957–981; these read LTGL…TFKQ, SCGL…DMPA, PRYL…ITSI, TTLN…ILHI, KDIL…GFKS, and MPAL…ILEN.

It belongs to the disease resistance NB-LRR family. Constitutively expressed.

Functionally, disease resistance (R) protein. Resistance proteins guard the plant against pathogens that contain an appropriate avirulence protein via an indirect interaction with this avirulence protein. That triggers a defense system including the hypersensitive response, which restricts the pathogen growth. Contribution of Pikm-1 is required to recognize the effector avirulence protein AVR-Pik. The chain is Disease resistance protein Pikm2-TS from Oryza sativa subsp. japonica (Rice).